Reading from the N-terminus, the 233-residue chain is Ubiquinone biosynthesis O-methyltransferase (233 aa).

S-adenosyl-L-methionine is bound by residues Arg-37, Gly-56, Asp-77, and Met-121.

This sequence belongs to the methyltransferase superfamily. UbiG/COQ3 family.

It carries out the reaction a 3-demethylubiquinol + S-adenosyl-L-methionine = a ubiquinol + S-adenosyl-L-homocysteine + H(+). The enzyme catalyses a 3-(all-trans-polyprenyl)benzene-1,2-diol + S-adenosyl-L-methionine = a 2-methoxy-6-(all-trans-polyprenyl)phenol + S-adenosyl-L-homocysteine + H(+). The protein operates within cofactor biosynthesis; ubiquinone biosynthesis. O-methyltransferase that catalyzes the 2 O-methylation steps in the ubiquinone biosynthetic pathway. This is Ubiquinone biosynthesis O-methyltransferase from Azoarcus sp. (strain BH72).